Reading from the N-terminus, the 295-residue chain is Protoheme IX farnesyltransferase (295 aa).

9 helical membrane passes run 24 to 43, 47 to 69, 94 to 114, 117 to 137, 144 to 164, 171 to 191, 216 to 236, 241 to 261, and 272 to 292; these read IMYL…PGSI, LALI…NMWY, SALE…AIAV, ISAI…TIWL, NIVI…AVVT, GFVL…ALSL, KYIL…ALFL, FYLG…VSIM, and MFSY…LCSI.

This sequence belongs to the UbiA prenyltransferase family. Protoheme IX farnesyltransferase subfamily.

Its subcellular location is the cell membrane. The enzyme catalyses heme b + (2E,6E)-farnesyl diphosphate + H2O = Fe(II)-heme o + diphosphate. It functions in the pathway porphyrin-containing compound metabolism; heme O biosynthesis; heme O from protoheme: step 1/1. Its function is as follows. Converts heme B (protoheme IX) to heme O by substitution of the vinyl group on carbon 2 of heme B porphyrin ring with a hydroxyethyl farnesyl side group. The sequence is that of Protoheme IX farnesyltransferase from Wolbachia sp. subsp. Brugia malayi (strain TRS).